Consider the following 284-residue polypeptide: 2-dehydro-3-deoxyphosphooctonate aldolase (284 aa).

Belongs to the KdsA family.

It localises to the cytoplasm. The catalysed reaction is D-arabinose 5-phosphate + phosphoenolpyruvate + H2O = 3-deoxy-alpha-D-manno-2-octulosonate-8-phosphate + phosphate. It functions in the pathway carbohydrate biosynthesis; 3-deoxy-D-manno-octulosonate biosynthesis; 3-deoxy-D-manno-octulosonate from D-ribulose 5-phosphate: step 2/3. The protein operates within bacterial outer membrane biogenesis; lipopolysaccharide biosynthesis. The sequence is that of 2-dehydro-3-deoxyphosphooctonate aldolase from Citrobacter koseri (strain ATCC BAA-895 / CDC 4225-83 / SGSC4696).